The primary structure comprises 354 residues: tRNA-specific 2-thiouridylase MnmA (354 aa).

ATP is bound by residues 6–13 (LLSGGVDS) and leucine 33. The Nucleophile role is filled by cysteine 100. Cysteine 100 and cysteine 195 form a disulfide bridge. An ATP-binding site is contributed by glycine 123. The tract at residues 145 to 147 (KDQ) is interaction with tRNA. Catalysis depends on cysteine 195, which acts as the Cysteine persulfide intermediate.

Belongs to the MnmA/TRMU family.

The protein resides in the cytoplasm. It catalyses the reaction S-sulfanyl-L-cysteinyl-[protein] + uridine(34) in tRNA + AH2 + ATP = 2-thiouridine(34) in tRNA + L-cysteinyl-[protein] + A + AMP + diphosphate + H(+). In terms of biological role, catalyzes the 2-thiolation of uridine at the wobble position (U34) of tRNA, leading to the formation of s(2)U34. In Borrelia turicatae (strain 91E135), this protein is tRNA-specific 2-thiouridylase MnmA.